The following is a 176-amino-acid chain: RNA pyrophosphohydrolase (176 aa).

Residues 6–149 (GYRPNVGIVI…KRDVYRRVMK (144 aa)) form the Nudix hydrolase domain. A Nudix box motif is present at residues 38-59 (GGINPGESPEQAMYRELFEEVG).

Belongs to the Nudix hydrolase family. RppH subfamily. The cofactor is a divalent metal cation.

In terms of biological role, accelerates the degradation of transcripts by removing pyrophosphate from the 5'-end of triphosphorylated RNA, leading to a more labile monophosphorylated state that can stimulate subsequent ribonuclease cleavage. In Proteus mirabilis (strain HI4320), this protein is RNA pyrophosphohydrolase.